The primary structure comprises 440 residues: Zinc finger MYND domain-containing protein 10 (440 aa).

An interaction with DNAAF11 region spans residues 366 to 440 (QDLRLQARRW…VLAAQGDRAK (75 aa)). The Zn(2+) site is built by Cys-394, Cys-397, Cys-405, Cys-408, Cys-414, Cys-418, His-426, and Cys-430. Residues 394–430 (CAYCSAEASKRCSRCQNEWYCCRECQVKHWEKHGKTC) form an MYND-type zinc finger.

It belongs to the ZMYND10 family. Interacts (via C-terminus) with DNAAF11 (via CS domain); this interaction stabilizes DNAAF11 at the protein level. Interacts (via C-terminus) with DNAL1; this interaction stabilizes DNAL1 at the protein level. Interacts with DNAAF4, HSPA8, IQUB, RUVBL2 and DYNTL5.

The protein resides in the cytoplasm. The protein localises to the cytoskeleton. It localises to the microtubule organizing center. Its subcellular location is the centrosome. It is found in the centriolar satellite. The protein resides in the apical cell membrane. The protein localises to the dynein axonemal particle. In terms of biological role, plays a role in axonemal structure organization and motility. Involved in axonemal pre-assembly of inner and outer dynein arms (IDA and ODA, respectively) for proper axoneme building for cilia motility. May act by indirectly regulating transcription of dynein proteins. This is Zinc finger MYND domain-containing protein 10 from Homo sapiens (Human).